The chain runs to 183 residues: Ribosome maturation factor RimM (183 aa).

Residues 104 to 183 (EGDYYWKDLM…TIEVDWDPGF (80 aa)) form the PRC barrel domain.

The protein belongs to the RimM family. As to quaternary structure, binds ribosomal protein uS19.

The protein localises to the cytoplasm. Its function is as follows. An accessory protein needed during the final step in the assembly of 30S ribosomal subunit, possibly for assembly of the head region. Essential for efficient processing of 16S rRNA. May be needed both before and after RbfA during the maturation of 16S rRNA. It has affinity for free ribosomal 30S subunits but not for 70S ribosomes. This Salmonella choleraesuis (strain SC-B67) protein is Ribosome maturation factor RimM.